The following is a 398-amino-acid chain: Acetylornithine aminotransferase (398 aa).

Residues 105–106 (GA) and phenylalanine 138 contribute to the pyridoxal 5'-phosphate site. Arginine 141 contributes to the N(2)-acetyl-L-ornithine binding site. Position 223-226 (223-226 (DEVQ)) interacts with pyridoxal 5'-phosphate. N6-(pyridoxal phosphate)lysine is present on lysine 252. Position 280 (threonine 280) interacts with N(2)-acetyl-L-ornithine. A pyridoxal 5'-phosphate-binding site is contributed by threonine 281.

Belongs to the class-III pyridoxal-phosphate-dependent aminotransferase family. ArgD subfamily. Homodimer. The cofactor is pyridoxal 5'-phosphate.

The protein localises to the cytoplasm. It catalyses the reaction N(2)-acetyl-L-ornithine + 2-oxoglutarate = N-acetyl-L-glutamate 5-semialdehyde + L-glutamate. The protein operates within amino-acid biosynthesis; L-arginine biosynthesis; N(2)-acetyl-L-ornithine from L-glutamate: step 4/4. This chain is Acetylornithine aminotransferase, found in Methanocaldococcus jannaschii (strain ATCC 43067 / DSM 2661 / JAL-1 / JCM 10045 / NBRC 100440) (Methanococcus jannaschii).